Reading from the N-terminus, the 208-residue chain is MAKVLYITAHPFNELVSNSMAAGKAFIETYQQHHPDDEVKHIDLFETYIPVIDKDVLTGWGKMSNGETLTDDEQMKVSRLSDILEEFLSADKYVFVTPMWNLSFPPVVKAYIDAISIAGKTFKYSAEGPQGLLTDKKVLHIQSRGGYYTEGPAADFEMGDRYLRTIMTFLGVPSYETIIIEGHNAEPHKTEEIKATSINNAEKLATTF.

FMN-binding positions include 17 to 19 (SNS), 99 to 102 (MWNL), and 143 to 146 (SRGG).

It belongs to the azoreductase type 1 family. In terms of assembly, homodimer. Requires FMN as cofactor.

It carries out the reaction 2 a quinone + NADH + H(+) = 2 a 1,4-benzosemiquinone + NAD(+). The catalysed reaction is N,N-dimethyl-1,4-phenylenediamine + anthranilate + 2 NAD(+) = 2-(4-dimethylaminophenyl)diazenylbenzoate + 2 NADH + 2 H(+). Its function is as follows. Quinone reductase that provides resistance to thiol-specific stress caused by electrophilic quinones. Functionally, also exhibits azoreductase activity. Catalyzes the reductive cleavage of the azo bond in aromatic azo compounds to the corresponding amines. This Staphylococcus aureus (strain Mu50 / ATCC 700699) protein is FMN-dependent NADH:quinone oxidoreductase.